The following is a 549-amino-acid chain: Zinc finger protein 266 (549 aa).

A KRAB domain is found at 1–42; it reads MLENYKNLATVGYQLFKPSLISWLEQEESRTVQRGDFQASEW. The C2H2-type 1; degenerate zinc finger occupies 156-178; it reads FDCSDSGKSFINHSHLQGHLRTH. The C2H2-type 2; degenerate zinc finger occupies 184 to 206; it reads HEWKECGRGFIHSTDLAVRIQTH. C2H2-type zinc fingers lie at residues 212 to 234, 240 to 262, 268 to 290, 296 to 318, 324 to 346, 352 to 374, 380 to 402, 408 to 430, 436 to 458, 464 to 486, 492 to 514, and 520 to 542; these read YKCK…MGTH, YECK…RKTH, YKCK…MKIH, YECK…LKTH, FECK…FRIH, YKCK…ARTH, YECK…TRTH, FECV…LRIH, FECL…MRTH, FTCM…MRIH, YKCK…ERTH, and YECK…ERRH. The disordered stretch occupies residues 530 to 549; the sequence is SSSSSFRNHERRHADERLSA.

Belongs to the krueppel C2H2-type zinc-finger protein family.

It is found in the nucleus. In terms of biological role, may be involved in transcriptional regulation. The sequence is that of Zinc finger protein 266 (ZNF266) from Homo sapiens (Human).